Here is a 166-residue protein sequence, read N- to C-terminus: UPF0178 protein BPUM_2255 (166 aa).

This sequence belongs to the UPF0178 family.

In Bacillus pumilus (strain SAFR-032), this protein is UPF0178 protein BPUM_2255.